We begin with the raw amino-acid sequence, 346 residues long: MDGVGESSTQNEVEEKPVIVRVKRKVGQSLLDAFWLEINERPLKRPTLDFSKLSISDSGERGPSVAEDVKPKKVLVRHLETVTDSETTADIIHSFFESDHNEKSCSKGKFEERKIAFKKDNRKEQRLTKSVQKQQIASENARFEQIWRSRKGNKEGIHEKCHFFDVIRVDTEERRDNAQEFTSLEDQKMLASFLPLLRECIPTAAEEIEADIQSSHTEEYVYDYYAVNEEMDISEDSSKNQFPLVIVEDEEEFCDGSDESDYDSEDSNAEDHPKTDYPEEEEEEEEEDDDDDDDDESEEEKSEASDESDDEETSKRHVRSVLGDDEFDDYAEDVYGYSESDEEFES.

N-acetylmethionine is present on Met-1. Acidic residues-rich tracts occupy residues Phe-253–Asn-268, Pro-278–Glu-312, and Gly-323–Glu-332. The segment at Phe-253–Ser-346 is disordered.

The protein belongs to the IWR1/SLC7A6OS family. As to quaternary structure, interacts with NRPD1. Associates with Pol II and Pol V complexes.

Functionally, probable regulatory factor for several RNA polymerases. Effector involved in facilitation of Pol V transcription as RNA scaffold and recruitment of silencing complex to target genomic sites. In Arabidopsis thaliana (Mouse-ear cress), this protein is RNA-directed DNA methylation 4 (RDM4).